Here is an 850-residue protein sequence, read N- to C-terminus: Tripartite terminase subunit 1 (850 aa).

Residues 191–219 (CAQCYEELTIIPNQGRSLNKRLQGLLCNH) form a C3H1-type zinc finger. The segment at 438 to 489 (GTTLMTASNSSNSSTHSQRNNGGGGRARGGGKKVVGGGVNGQDGDGSENGLR) is disordered. Positions 439 to 457 (TTLMTASNSSNSSTHSQRN) are enriched in low complexity. The span at 458 to 481 (NGGGGRARGGGKKVVGGGVNGQDG) shows a compositional bias: gly residues. Residue 709–716 (YNETFGKQ) coordinates ATP. The interval 801 to 831 (WLPSPYPSSSTAGVSRRVRATRKRPRRASSL) is disordered. Over residues 816–827 (RRVRATRKRPRR) the composition is skewed to basic residues. Residues 822 to 827 (RKRPRR) carry the Nuclear localization signal motif.

Belongs to the herpesviridae TRM1 protein family. In terms of assembly, associates with TRM2 and TRM3 to form the tripartite terminase complex. Interacts with portal protein.

The protein resides in the host nucleus. Functionally, component of the molecular motor that translocates viral genomic DNA in empty capsid during DNA packaging. Forms a tripartite terminase complex together with TRM2 and TRM3 in the host cytoplasm. Once the complex reaches the host nucleus, it interacts with the capsid portal vertex. This portal forms a ring in which genomic DNA is translocated into the capsid. TRM1 carries an endonuclease activity that plays an important role for the cleavage of concatemeric viral DNA into unit length genomes. The sequence is that of Tripartite terminase subunit 1 from Homo sapiens (Human).